Here is a 319-residue protein sequence, read N- to C-terminus: tRNA-cytidine(32) 2-sulfurtransferase (319 aa).

The short motif at 43 to 48 is the PP-loop motif element; the sequence is SGGKDS. [4Fe-4S] cluster is bound by residues Cys118, Cys121, and Cys209. The tract at residues 272–297 is disordered; the sequence is DLAFDSEKMPERFSDGSEEDESEIKI. Over residues 276–286 the composition is skewed to basic and acidic residues; that stretch reads DSEKMPERFSD.

The protein belongs to the TtcA family. As to quaternary structure, homodimer. Mg(2+) is required as a cofactor. The cofactor is [4Fe-4S] cluster.

Its subcellular location is the cytoplasm. It carries out the reaction cytidine(32) in tRNA + S-sulfanyl-L-cysteinyl-[cysteine desulfurase] + AH2 + ATP = 2-thiocytidine(32) in tRNA + L-cysteinyl-[cysteine desulfurase] + A + AMP + diphosphate + H(+). Its pathway is tRNA modification. In terms of biological role, catalyzes the ATP-dependent 2-thiolation of cytidine in position 32 of tRNA, to form 2-thiocytidine (s(2)C32). The sulfur atoms are provided by the cysteine/cysteine desulfurase (IscS) system. The protein is tRNA-cytidine(32) 2-sulfurtransferase of Neisseria gonorrhoeae (strain ATCC 700825 / FA 1090).